Reading from the N-terminus, the 204-residue chain is 8-oxoguanine DNA glycosylase/AP lyase (204 aa).

Catalysis depends on residues Lys-129 and Asp-147.

This sequence belongs to the type-2 OGG1 family.

It catalyses the reaction 2'-deoxyribonucleotide-(2'-deoxyribose 5'-phosphate)-2'-deoxyribonucleotide-DNA = a 3'-end 2'-deoxyribonucleotide-(2,3-dehydro-2,3-deoxyribose 5'-phosphate)-DNA + a 5'-end 5'-phospho-2'-deoxyribonucleoside-DNA + H(+). In terms of biological role, catalyzes the excision of an oxidatively damaged form of guanine (7,8-dihydro-8-oxoguanine = 8-oxoG) from DNA. Also cleaves the DNA backbone at apurinic/apyrimidinic sites (AP sites). The chain is 8-oxoguanine DNA glycosylase/AP lyase from Thermoplasma acidophilum (strain ATCC 25905 / DSM 1728 / JCM 9062 / NBRC 15155 / AMRC-C165).